The sequence spans 440 residues: Tryptophan aminotransferase-related protein 2 (440 aa).

The chain crosses the membrane as a helical span at residues 7–26; the sequence is FLSWRNMLVLSLAINFSLIL. Residues Tyr-112, 154–155, Asn-222, 242–245, 265–268, and Arg-276 each bind pyridoxal 5'-phosphate; these read ST, DLAY, and TASK. Lys-268 is subject to N6-(pyridoxal phosphate)lysine.

It belongs to the alliinase family. It depends on pyridoxal 5'-phosphate as a cofactor. Expressed in roots, cotyledons and in the apical parts of hypocotyls. In roots, restricted to the provasculature of meristematic regions. Detected on the inner side of the apical hooks.

It localises to the membrane. It catalyses the reaction L-tryptophan + 2-oxoglutarate = indole-3-pyruvate + L-glutamate. The enzyme catalyses L-tryptophan + pyruvate = indole-3-pyruvate + L-alanine. It participates in plant hormone metabolism; auxin biosynthesis. Its activity is regulated as follows. Inhibited by L-kynurenine. Functionally, involved in auxin production. Both TAA1 and TAR2 are required for maintaining proper auxin levels in roots, while TAA1, TAR1 and TAR2 are required for proper embryo patterning. Involved in the maintenance of the root stem cell niches. The sequence is that of Tryptophan aminotransferase-related protein 2 (TAR2) from Arabidopsis thaliana (Mouse-ear cress).